Here is a 760-residue protein sequence, read N- to C-terminus: BMP/retinoic acid-inducible neural-specific protein 1 (760 aa).

The N-terminal stretch at 1-16 (MNWRFVELLYFLFVWG) is a signal peptide. The 184-residue stretch at 68–251 (RYKIYREFAR…FVQSALSYIM (184 aa)) folds into the MACPF domain. N-linked (GlcNAc...) asparagine glycans are attached at residues Asn156, Asn433, Asn443, Asn553, Asn599, Asn630, and Asn676.

It belongs to the BRINP family.

It is found in the cytoplasm. Plays a role in neurogenesis and brain development. May suppress cell cycle progression in postmitotic neurons by inhibiting G1/S transition. The polypeptide is BMP/retinoic acid-inducible neural-specific protein 1 (Brinp1) (Rattus norvegicus (Rat)).